The following is an 873-amino-acid chain: Nonsense-mediated mRNA decay factor SMG8 (873 aa).

The disordered stretch occupies residues 531–604 (AKKMAQREDE…ESMASKTERE (74 aa)). A compositionally biased stretch (acidic residues) spans 540 to 550 (ELAEEDTDLDI). Composition is skewed to low complexity over residues 551-562 (PESLLDPDSTSP) and 574-583 (SSSESSSQES). Residues 591 to 604 (SRRDESMASKTERE) show a composition bias toward basic and acidic residues.

The protein belongs to the SMG8 family.

Involved in nonsense-mediated decay (NMD) of mRNAs containing premature stop codons. Probable component of kinase complex containing smg-1 and recruited to stalled ribosomes. This chain is Nonsense-mediated mRNA decay factor SMG8 (smg-8), found in Caenorhabditis elegans.